The following is a 432-amino-acid chain: Probable exopolygalacturonase X (432 aa).

Residues 1–23 form the signal peptide; it reads MKFSYSFVQVVSLLLSLSPSVEG. Residues asparagine 113, asparagine 129, and asparagine 199 are each glycosylated (N-linked (GlcNAc...) asparagine). The PbH1 1 repeat unit spans residues 231 to 252; it reads SDNIVIQNSVINNGDDCVSFKP. Aspartate 245 (proton donor) is an active-site residue. Cysteine 247 and cysteine 264 form a disulfide bridge. N-linked (GlcNAc...) asparagine glycosylation is found at asparagine 253 and asparagine 265. PbH1 repeat units follow at residues 254–274, 285–306, and 327–348; these read STNIIVQNLHCNGSHGISVGS, VQNVLVYNISMYNASDGARIKV, and VKNITYNQMYIENVDWAIEVTQ. Histidine 268 is a catalytic residue. Asparagine 292, asparagine 297, asparagine 329, asparagine 354, and asparagine 364 each carry an N-linked (GlcNAc...) asparagine glycan. The PbH1 5 repeat unit spans residues 362–394; it reads PSNLTISDIHFKNFRGTTSGKRDPDVGTIVCSS. Cysteine 392 and cysteine 398 are joined by a disulfide.

This sequence belongs to the glycosyl hydrolase 28 family.

The protein localises to the secreted. It catalyses the reaction [(1-&gt;4)-alpha-D-galacturonosyl](n) + H2O = alpha-D-galacturonate + [(1-&gt;4)-alpha-D-galacturonosyl](n-1). Functionally, specific in hydrolyzing the terminal glycosidic bond of polygalacturonic acid and oligogalacturonates. In Neosartorya fischeri (strain ATCC 1020 / DSM 3700 / CBS 544.65 / FGSC A1164 / JCM 1740 / NRRL 181 / WB 181) (Aspergillus fischerianus), this protein is Probable exopolygalacturonase X (pgaX).